The following is a 364-amino-acid chain: Abhydrolase domain-containing protein C57A10.08c (364 aa).

Residues 1–8 (MYFFTISR) lie on the Cytoplasmic side of the membrane. A helical; Signal-anchor for type II membrane protein membrane pass occupies residues 9–29 (LTSFISYGILGALGILTFLYL). Over 30-364 (YDAYLAKSFQ…DKFSTTDHNI (335 aa)) the chain is Lumenal. Catalysis depends on S183, which acts as the Charge relay system. N-linked (GlcNAc...) asparagine glycosylation occurs at N326. Catalysis depends on H336, which acts as the Charge relay system.

The protein belongs to the AB hydrolase superfamily.

Its subcellular location is the endoplasmic reticulum membrane. This is Abhydrolase domain-containing protein C57A10.08c from Schizosaccharomyces pombe (strain 972 / ATCC 24843) (Fission yeast).